The primary structure comprises 335 residues: Thioredoxin reductase (335 aa).

Residues 22 to 25, 44 to 51, Asn-60, and Val-93 contribute to the FAD site; these read SGPA and EGTSFGGA. A disulfide bridge connects residues Cys-145 and Cys-148. The NADP(+) site is built by Ser-166, His-185, Arg-191, Ile-248, and Tyr-268. FAD is bound by residues Asp-288 and 295–298; that span reads RQAV. NADP(+) is bound at residue Arg-295.

This sequence belongs to the class-II pyridine nucleotide-disulfide oxidoreductase family. As to quaternary structure, homodimer. It depends on FAD as a cofactor.

It is found in the cytoplasm. It carries out the reaction [thioredoxin]-dithiol + NADP(+) = [thioredoxin]-disulfide + NADPH + H(+). This is Thioredoxin reductase from Mycobacterium tuberculosis (strain CDC 1551 / Oshkosh).